Here is a 143-residue protein sequence, read N- to C-terminus: UPF0201 protein Msed_1787 (143 aa).

It belongs to the UPF0201 family.

The protein is UPF0201 protein Msed_1787 of Metallosphaera sedula (strain ATCC 51363 / DSM 5348 / JCM 9185 / NBRC 15509 / TH2).